A 367-amino-acid chain; its full sequence is Innexin inx4 (367 aa).

At 1-21 the chain is on the cytoplasmic side; the sequence is MYAAVKPLSKYLQFKSVHIYD. Residues 22 to 42 traverse the membrane as a helical segment; it reads AIFTLHSKVTVALLLACTFLL. Topologically, residues 43-110 are extracellular; the sequence is SSKQYFGDPI…PENRNYITYY (68 aa). A helical transmembrane segment spans residues 111–131; that stretch reads QWVVLVLLLESFVFYMPAFLW. The Cytoplasmic portion of the chain corresponds to 132–186; sequence KIWEGGRLKHLCDDFHKMAVCKDKSRTHLRVLVNYFSSDYKETHFRYFVSYVFCE. The chain crosses the membrane as a helical span at residues 187 to 207; that stretch reads ILNLSISILNFLLLDVFFGGF. The Extracellular portion of the chain corresponds to 208–268; sequence WGRYRNALLS…LLPLNILNEK (61 aa). Residues 269-289 traverse the membrane as a helical segment; that stretch reads IFAFLWIWFILVAMLISLKFL. At 290 to 367 the chain is on the cytoplasmic side; sequence YRLATVLYPG…IKIPPGADKI (78 aa).

Belongs to the pannexin family. Expressed in nurse cells and oocyte during oogenesis. Uniform expression in imaginal wing disk and low expression in developing imaginal CNS. Expressed in embryonic pole cells and primordial germ cells.

Its subcellular location is the cell membrane. It localises to the cell junction. The protein resides in the gap junction. Functionally, structural component of the gap junctions in germline cells. Required for differentiation and survival of germline cysts in females and of spermatogonia in males; gap junctional communication between spermatogonia and somatic cyst cells may be required for normal differentiation and survival of spermatogonia. The sequence is that of Innexin inx4 (zpg) from Drosophila melanogaster (Fruit fly).